We begin with the raw amino-acid sequence, 61 residues long: Sec-independent protein translocase protein TatA (61 aa).

The chain crosses the membrane as a helical span at residues methionine 1–phenylalanine 21.

Belongs to the TatA/E family. Forms a complex with TatC.

Its subcellular location is the cell membrane. Functionally, part of the twin-arginine translocation (Tat) system that transports large folded proteins containing a characteristic twin-arginine motif in their signal peptide across membranes. TatA could form the protein-conducting channel of the Tat system. The chain is Sec-independent protein translocase protein TatA from Bacillus anthracis (strain A0248).